Reading from the N-terminus, the 343-residue chain is Dihydroorotase (343 aa).

Zn(2+) contacts are provided by His13 and His15. Substrate-binding positions include 15–17 (HFR) and Asn41. Zn(2+)-binding residues include Lys98, His135, and His173. Lys98 bears the N6-carboxylysine mark. His135 contacts substrate. Substrate is bound at residue Leu218. Asp246 is a Zn(2+) binding site. The active site involves Asp246. Substrate-binding residues include His250 and Ala262.

The protein belongs to the metallo-dependent hydrolases superfamily. DHOase family. Class II DHOase subfamily. As to quaternary structure, homodimer. Requires Zn(2+) as cofactor.

The enzyme catalyses (S)-dihydroorotate + H2O = N-carbamoyl-L-aspartate + H(+). Its pathway is pyrimidine metabolism; UMP biosynthesis via de novo pathway; (S)-dihydroorotate from bicarbonate: step 3/3. Functionally, catalyzes the reversible cyclization of carbamoyl aspartate to dihydroorotate. This is Dihydroorotase from Marinomonas sp. (strain MWYL1).